We begin with the raw amino-acid sequence, 264 residues long: NAD kinase 1 (264 aa).

Aspartate 45 serves as the catalytic Proton acceptor. NAD(+) is bound by residues 45-46 (DG), glycine 46, 122-123 (NE), arginine 148, aspartate 150, serine 158, 161-166 (TAYNKS), and histidine 223.

The protein belongs to the NAD kinase family. As to quaternary structure, homotetramer. A divalent metal cation is required as a cofactor.

The protein resides in the cytoplasm. The enzyme catalyses NAD(+) + ATP = ADP + NADP(+) + H(+). With respect to regulation, competitively inhibited by 5'-thioacetyladenosine (TAA) and di-(5'-thioadenosine) (DTA). Its function is as follows. Involved in the regulation of the intracellular balance of NAD and NADP, and is a key enzyme in the biosynthesis of NADP. Catalyzes specifically the phosphorylation on 2'-hydroxyl of the adenosine moiety of NAD to yield NADP. The polypeptide is NAD kinase 1 (Listeria monocytogenes serovar 1/2a (strain ATCC BAA-679 / EGD-e)).